The chain runs to 1615 residues: ABC transporter A family member 4 (1615 aa).

Transmembrane regions (helical) follow at residues 30-50 (ILLP…SMII), 233-253 (GVFI…NIVI), 278-298 (SIIS…ILSA), 308-328 (ITLI…AFIL), 337-357 (YAGL…IIIG), 365-385 (LKLL…YVWC), and 405-425 (YEII…LWYL). Residues 182 to 383 (TQIQTGVDQA…PIAISVANYV (202 aa)) enclose the ABC transmembrane type-2 domain. In terms of domain architecture, ABC transporter 1 spans 492-727 (ISIRNLRKEF…FGVGYLLTIS (236 aa)). 528–535 (GPNGSGKS) is a binding site for ATP. A run of 7 helical transmembrane segments spans residues 855 to 875 (IKSF…GLIL), 1022 to 1042 (FVAI…IAAS), 1075 to 1095 (IWDY…IIAV), 1106 to 1126 (YISG…LMSF), 1135 to 1155 (VGAI…ISFI), 1174 to 1194 (IIEY…ILAI), and 1218 to 1238 (LLPN…ILLI). One can recognise an ABC transporter 2 domain in the interval 1293–1528 (IIFNNLYKKF…FGSGYSIEVK (236 aa)). Position 1331 to 1338 (1331 to 1338 (GLNGCGKS)) interacts with ATP.

Belongs to the ABC transporter superfamily. ABCA family.

The protein localises to the membrane. The polypeptide is ABC transporter A family member 4 (abcA4) (Dictyostelium discoideum (Social amoeba)).